Here is a 417-residue protein sequence, read N- to C-terminus: N-acetylmuramoyl-L-alanine amidase AmiC (417 aa).

Positions 1 to 31 (MSGSNTAISRRRLLQGAGAMWLLSVSQVSLA) form a signal peptide, tat-type signal. The segment at 166–185 (LEKQVPPAQSGPQPGKAGRD) is disordered. A MurNAc-LAA domain is found at 190 to 404 (IMLDPGHGGE…VAESILAGIK (215 aa)).

This sequence belongs to the N-acetylmuramoyl-L-alanine amidase 3 family. Predicted to be exported by the Tat system. The position of the signal peptide cleavage has not been experimentally proven.

The protein resides in the periplasm. It carries out the reaction Hydrolyzes the link between N-acetylmuramoyl residues and L-amino acid residues in certain cell-wall glycopeptides.. In terms of biological role, cell-wall hydrolase involved in septum cleavage during cell division. The polypeptide is N-acetylmuramoyl-L-alanine amidase AmiC (amiC) (Escherichia coli O6:H1 (strain CFT073 / ATCC 700928 / UPEC)).